Here is a 485-residue protein sequence, read N- to C-terminus: Pup--protein ligase (485 aa).

Glu-33 contributes to the Mg(2+) binding site. Arg-76 serves as a coordination point for ATP. Tyr-78 is a binding site for Mg(2+). The Proton acceptor role is filled by Asp-80. Residue Glu-86 coordinates Mg(2+). Residues Thr-89 and Trp-451 each coordinate ATP.

It belongs to the Pup ligase/Pup deamidase family. Pup-conjugating enzyme subfamily.

The enzyme catalyses ATP + [prokaryotic ubiquitin-like protein]-L-glutamate + [protein]-L-lysine = ADP + phosphate + N(6)-([prokaryotic ubiquitin-like protein]-gamma-L-glutamyl)-[protein]-L-lysine.. It functions in the pathway protein degradation; proteasomal Pup-dependent pathway. Its pathway is protein modification; protein pupylation. Its function is as follows. Catalyzes the covalent attachment of the prokaryotic ubiquitin-like protein modifier Pup to the proteasomal substrate proteins, thereby targeting them for proteasomal degradation. This tagging system is termed pupylation. The ligation reaction involves the side-chain carboxylate of the C-terminal glutamate of Pup and the side-chain amino group of a substrate lysine. The polypeptide is Pup--protein ligase (Bifidobacterium longum subsp. infantis (strain ATCC 15697 / DSM 20088 / JCM 1222 / NCTC 11817 / S12)).